The sequence spans 160 residues: Ribonuclease P protein component 2 (160 aa).

Belongs to the eukaryotic/archaeal RNase P protein component 2 family. In terms of assembly, consists of a catalytic RNA component and at least 4-5 protein subunits.

Its subcellular location is the cytoplasm. The catalysed reaction is Endonucleolytic cleavage of RNA, removing 5'-extranucleotides from tRNA precursor.. In terms of biological role, part of ribonuclease P, a protein complex that generates mature tRNA molecules by cleaving their 5'-ends. The chain is Ribonuclease P protein component 2 from Methanosphaerula palustris (strain ATCC BAA-1556 / DSM 19958 / E1-9c).